A 333-amino-acid chain; its full sequence is Cell division protein FtsQ (333 aa).

A disordered region spans residues 1–99 (MTGTGPHGDP…ARREAKRRAV (99 aa)). At 1-118 (MTGTGPHGDP…VPRNTIRGLK (118 aa)) the chain is on the cytoplasmic side. Positions 11-22 (AEDPAGPDDTAA) are enriched in acidic residues. A compositionally biased stretch (low complexity) spans 44 to 57 (TTETTAQTGTTAEA). The segment covering 73–92 (ERAERRAARDRAMAIEQARR) has biased composition (basic and acidic residues). A helical membrane pass occupies residues 119–139 (VLMWAALVSVLAVALGLLLYF). Residues 140–333 (TPIMSARNVE…VSSPDLPTVK (194 aa)) are Extracellular-facing. The POTRA domain maps to 143–211 (MSARNVEVSG…STLKISIVER (69 aa)).

This sequence belongs to the FtsQ/DivIB family. FtsQ subfamily.

It localises to the cell membrane. Its function is as follows. Essential cell division protein. The protein is Cell division protein FtsQ of Mycolicibacterium smegmatis (strain ATCC 700084 / mc(2)155) (Mycobacterium smegmatis).